The following is a 534-amino-acid chain: Probable protein kinase UbiB (534 aa).

The chain crosses the membrane as a helical span at residues 23–43 (DLLFDLPLPWFLLALRYVLPW). The Protein kinase domain occupies 125 to 492 (RFDVEPLASA…WKKRKDDWFL (368 aa)). Residues 131-139 (LASASVAQV) and lysine 153 contribute to the ATP site. Aspartate 288 acts as the Proton acceptor in catalysis. 2 helical membrane-spanning segments follow: residues 490–510 (WFLR…AAGG) and 512–532 (LHEL…YLVV).

Belongs to the ABC1 family. UbiB subfamily.

The protein localises to the cell inner membrane. It participates in cofactor biosynthesis; ubiquinone biosynthesis [regulation]. Is probably a protein kinase regulator of UbiI activity which is involved in aerobic coenzyme Q (ubiquinone) biosynthesis. The sequence is that of Probable protein kinase UbiB from Pseudomonas fluorescens (strain Pf0-1).